Consider the following 577-residue polypeptide: MAEAGSGFLEQLKSCIVWSWTYLWTVWFFLVLFLVYILRVPLRINDNLSTVSMFLNTLTPKFYVALTGTSSLISGLILIFEWWYFRKYGTSFIEQVSVSHLRPLLGGVDNNSSNNSNSSNGDSDSNRQSVSECKVWRNPLNLFRGAEYNRYTWVTGREPLTYYDMNLSAQDHQTFFTCDSDHLRPADAIMQKAWRERNPQARISAAHEALEINEIRSRVEVPLIASSTIWEIKLLPKCATAYILLAEEEATTIAEAEKLFKQALKAGDGCYRRSQQLQHHGSQYEAQHRRDTNVLVYIKRRLAMCARRLGRTREAVKMMRDLMKEFPLLSMFNIHENLLEALLELQAYADVQAVLAKYDDISLPKSATICYTAALLKARAVSDKFSPEAASRRGLSTAEMNAVEAIHRAVEFNPHVPKYLLEMKSLILPPEHILKRGDSEAIAYAFFHLAHWKRVEGALNLLHCTWEGTFRMIPYPLEKGHLFYPYPICTETADRELLPSFHEVSVYPKKELPFFILFTAGLCSFTAMLALLTHQFPELMGVFAKAFLSTLFAPLNFVMEKVESILPSSLWHQLTRI.

The chain crosses the membrane as a helical span at residues 15–35 (CIVWSWTYLWTVWFFLVLFLV). Asn47 carries N-linked (GlcNAc...) asparagine glycosylation. A helical membrane pass occupies residues 62 to 82 (FYVALTGTSSLISGLILIFEW). Ser386 is subject to Phosphoserine. Helical transmembrane passes span 512-532 (LPFF…LALL) and 539-559 (LMGV…NFVM).

It belongs to the ST7 family.

Its subcellular location is the membrane. The polypeptide is Suppressor of tumorigenicity 7 protein (St7) (Rattus norvegicus (Rat)).